The following is a 470-amino-acid chain: AAA-ATPase At5g40000 (470 aa).

Residues 1 to 30 (MMMMGDSFGSIGSSMASLFFLWATIQQIFP) form the signal peptide. An ATP-binding site is contributed by 248-255 (GPPGTGKS).

It belongs to the AAA ATPase family. BCS1 subfamily. It depends on Mg(2+) as a cofactor.

The enzyme catalyses ATP + H2O = ADP + phosphate + H(+). The chain is AAA-ATPase At5g40000 from Arabidopsis thaliana (Mouse-ear cress).